A 410-amino-acid chain; its full sequence is MNNKLFLRNKQHINLGTIGHVDHGKTTLTTAISYLLNLQGLSKKYNYSDIDSAPEEKIRGITINTTHIEYETLTKHCAHIDCPGHSDYIKNMIIGATQMDIAILVISIIDGIMPQTYEHLLLIKQIGIKNIIIFLNKEDLCDDVELIDFIKLEVNELLIKYNFDLNYIHILTGSALNVINIIQKNKDYELIKSNIWIQKLNNLIQIIDNIIIPTRKINDYFLMSIEDVFSITGRGTVVTGKIEQGCINLNDEIEILKFEKSSPNLTTVIGLEMFKKQLTQAQSGDNVGILLRNIQKKDIKRGMILATPNKLKVYKSFIAETYILTKEEGGRHKPFNIGYKPQFFIRTVDVTGEIKNIYLNENVQKVAIPGDKITLHIELKHYIVLTLNMKFSIREGGKTIGAGIITEIKN.

A tr-type G domain is found at 10–214 (KQHINLGTIG…QIIDNIIIPT (205 aa)). The G1 stretch occupies residues 19 to 26 (GHVDHGKT). 19–26 (GHVDHGKT) is a binding site for GTP. Thr26 provides a ligand contact to Mg(2+). A G2 region spans residues 60 to 64 (GITIN). Positions 81–84 (DCPG) are G3. Residues 81 to 85 (DCPGH) and 136 to 139 (NKED) each bind GTP. Positions 136–139 (NKED) are G4. The G5 stretch occupies residues 174 to 176 (SAL).

This sequence belongs to the TRAFAC class translation factor GTPase superfamily. Classic translation factor GTPase family. EF-Tu/EF-1A subfamily.

Its subcellular location is the plastid. It is found in the apicoplast. The catalysed reaction is GTP + H2O = GDP + phosphate + H(+). In terms of biological role, GTP hydrolase that promotes the GTP-dependent binding of aminoacyl-tRNA to the A-site of ribosomes during protein biosynthesis. The polypeptide is Elongation factor Tu, apicoplast (tufA) (Plasmodium falciparum (isolate 3D7)).